A 286-amino-acid polypeptide reads, in one-letter code: Ribosome maturation factor RimP (286 aa).

The span at L200 to L224 shows a compositional bias: acidic residues. Residues L200 to H286 are disordered. Over residues V248 to K267 the composition is skewed to basic residues. The span at A273–H286 shows a compositional bias: polar residues.

Belongs to the RimP family.

The protein localises to the cytoplasm. Required for maturation of 30S ribosomal subunits. The chain is Ribosome maturation factor RimP from Xanthobacter autotrophicus (strain ATCC BAA-1158 / Py2).